The sequence spans 208 residues: Small ribosomal subunit protein uS4 (208 aa).

The region spanning 98–161 (RRLDNVVYRL…KASPRIKELV (64 aa)) is the S4 RNA-binding domain.

The protein belongs to the universal ribosomal protein uS4 family. Part of the 30S ribosomal subunit. Contacts protein S5. The interaction surface between S4 and S5 is involved in control of translational fidelity.

One of the primary rRNA binding proteins, it binds directly to 16S rRNA where it nucleates assembly of the body of the 30S subunit. Functionally, with S5 and S12 plays an important role in translational accuracy. In Desulforamulus reducens (strain ATCC BAA-1160 / DSM 100696 / MI-1) (Desulfotomaculum reducens), this protein is Small ribosomal subunit protein uS4.